The sequence spans 66 residues: MPKQKTHRGAAKRFKKTGSGKLKRSHAYTSHLFANKSTKAKRKLRKAGVVSAGDFKRIRQMLDNLK.

Residues 1-26 are disordered; it reads MPKQKTHRGAAKRFKKTGSGKLKRSH.

Belongs to the bacterial ribosomal protein bL35 family.

The protein is Large ribosomal subunit protein bL35 of Bacillus anthracis.